The primary structure comprises 147 residues: MLKPMALITPITAMAFDYGTRRVGVAVGNSVTKAGEPLKTIAAPNSDTLFKDIEQLLAEWQPNQLVVGHPTHPDGAPHEMTAKAIRFGNQLHGRFQLPVAWVDERYTSAVLEGDAQMRDNLDAHSATLILEQYFSELDTNLNTKAAD.

The protein belongs to the YqgF nuclease family.

It localises to the cytoplasm. Could be a nuclease involved in processing of the 5'-end of pre-16S rRNA. The polypeptide is Putative pre-16S rRNA nuclease (Polynucleobacter necessarius subsp. necessarius (strain STIR1)).